A 355-amino-acid polypeptide reads, in one-letter code: MAKDERQAALDAALKKIEKNFGKGSIMRMGEKVDTQVSTVSSGSLALDEALGVGGYPRGRIVEIYGPESSGKTTVALHAVAEVQKQGGTAAYIDAENAMDPKYATALGVNIDDLLLSQPDTGEQGLEIADALVSSGAVDILVVDSVAALVPRAEIEGEMGDAHVGLQARLMSQALRKLSGTINKTKTIALFINQIREKVGVMFGNPEVTPGGRALKFYSTVRLEVRRAETIKNGTDMIGNRARIKVVKNKVAPPFKVAEVDIMYGQGISRTGELVDMAVEKDIINKSGSWYSYGSERIGQGRENAKNYLADHEDVEDEVRLKVRAAYGISDVPEEDLPTTEDEQINILPDDSTEE.

An ATP-binding site is contributed by 66-73 (GPESSGKT). Positions 331-355 (DVPEEDLPTTEDEQINILPDDSTEE) are disordered. Acidic residues predominate over residues 332–344 (VPEEDLPTTEDEQ).

The protein belongs to the RecA family.

Its subcellular location is the cytoplasm. Can catalyze the hydrolysis of ATP in the presence of single-stranded DNA, the ATP-dependent uptake of single-stranded DNA by duplex DNA, and the ATP-dependent hybridization of homologous single-stranded DNAs. It interacts with LexA causing its activation and leading to its autocatalytic cleavage. The polypeptide is Protein RecA (Latilactobacillus sakei subsp. sakei (strain 23K) (Lactobacillus sakei subsp. sakei)).